The sequence spans 294 residues: Small ribosomal subunit biogenesis GTPase RsgA 2, mitochondrial (294 aa).

The transit peptide at 1–68 (MQTFSSAAAL…RSFLAPVLPL (68 aa)) directs the protein to the mitochondrion. Residues 155-294 (VSEVLDPPVA…VSFFLSYFIL (140 aa)) form the CP-type G domain. 255–263 (GPSGVGKSS) is a binding site for GTP.

This sequence belongs to the TRAFAC class YlqF/YawG GTPase family.

The protein resides in the mitochondrion. This chain is Small ribosomal subunit biogenesis GTPase RsgA 2, mitochondrial, found in Arabidopsis thaliana (Mouse-ear cress).